The chain runs to 60 residues: Cytotoxin 1 (60 aa).

Intrachain disulfides connect C3-C21, C14-C38, C42-C53, and C54-C59.

Belongs to the three-finger toxin family. Short-chain subfamily. Type IA cytotoxin sub-subfamily. Monomer, or heterodimer with alpha-cobratoxin (AC P01391); disulfide-linked. In terms of tissue distribution, expressed by the venom gland.

Its subcellular location is the secreted. It localises to the target cell membrane. Monomer: shows cytolytic activity (apoptosis is induced in C2C12 cells, but no cytotoxicity is observed on INS-1E). In addition, this toxin shows insulinotropic activity that may be mediated by the modulation of potassium channels (Kv). It induces the increase of intracellular calcium release. It induces insulin secretion from rat INS-1E cells in absence and in presence of glucose, without affecting cell viability and integrity. In presence of glucose, the insulinotropic activity is increased, suggesting a possible synergistic effect with glucose. Its insulinotropic activity does not involve GLP-1R signaling. In terms of biological role, heterodimer: has no cytolytic activity, but retains most of the alpha-cobratoxin capacity to compete with alpha-bungarotoxin for binding to Torpedo and alpha-7/CHRNA7 nicotinic acetylcholine receptors (nAChRs) as well as to Lymnea stagnalis acetylcholine-binding protein. The sequence is that of Cytotoxin 1 from Naja kaouthia (Monocled cobra).